The primary structure comprises 287 residues: 3-methyl-2-oxobutanoate hydroxymethyltransferase (287 aa).

Positions Met1 to Pro19 are enriched in polar residues. The segment at Met1 to Met24 is disordered. Asp66 and Asp105 together coordinate Mg(2+). 3-methyl-2-oxobutanoate is bound by residues Asp66–Ser67, Asp105, and Lys135. Mg(2+) is bound at residue Glu137. Glu204 acts as the Proton acceptor in catalysis.

Belongs to the PanB family. In terms of assembly, homodecamer; pentamer of dimers. The cofactor is Mg(2+).

The protein resides in the cytoplasm. The catalysed reaction is 3-methyl-2-oxobutanoate + (6R)-5,10-methylene-5,6,7,8-tetrahydrofolate + H2O = 2-dehydropantoate + (6S)-5,6,7,8-tetrahydrofolate. The protein operates within cofactor biosynthesis; (R)-pantothenate biosynthesis; (R)-pantoate from 3-methyl-2-oxobutanoate: step 1/2. Catalyzes the reversible reaction in which hydroxymethyl group from 5,10-methylenetetrahydrofolate is transferred onto alpha-ketoisovalerate to form ketopantoate. This chain is 3-methyl-2-oxobutanoate hydroxymethyltransferase, found in Sphingopyxis alaskensis (strain DSM 13593 / LMG 18877 / RB2256) (Sphingomonas alaskensis).